A 522-amino-acid polypeptide reads, in one-letter code: Lysine--tRNA ligase (522 aa).

The 'HIGH' region motif lies at 44–52; sequence PSGLPHIGT. The short motif at 290 to 294 is the 'KMSKS' region element; the sequence is KISKS. K293 provides a ligand contact to ATP.

This sequence belongs to the class-I aminoacyl-tRNA synthetase family.

The protein resides in the cytoplasm. The catalysed reaction is tRNA(Lys) + L-lysine + ATP = L-lysyl-tRNA(Lys) + AMP + diphosphate. The chain is Lysine--tRNA ligase from Rickettsia africae (strain ESF-5).